The chain runs to 365 residues: MNITNCTTEASMAIRPKTITEKMLICMTLVVITTLTTLLNLAVIMAIGTTKKLHQPANYLICSLAVTDLLVAVLVMPLSIIYIVMDRWKLGYFLCEVWLSVDMTCCTCSILHLCVIALDRYWAITNAIEYARKRTAKRAALMILTVWTISIFISMPPLFWRSHRRLSPPPSQCTIQHDHVIYTIYSTLGAFYIPLTLILILYYRIYHAAKSLYQKRGSSRHLSNRSTDSQNSFASCKLTQTFCVSDFSTSDPTTEFEKFHASIRIPPFDNDLDHPGERQQISSTRERKAARILGLILGAFILSWLPFFIKELIVGLSIYTVSSEVADFLTWLGYVNSLINPLLYTSFNEDFKLAFKKLIRCREHT.

Residues 1–21 (MNITNCTTEASMAIRPKTITE) are Extracellular-facing. N-linked (GlcNAc...) asparagine glycans are attached at residues Asn-2 and Asn-5. A helical transmembrane segment spans residues 22 to 45 (KMLICMTLVVITTLTTLLNLAVIM). Over 46–59 (AIGTTKKLHQPANY) the chain is Cytoplasmic. Residues 60-84 (LICSLAVTDLLVAVLVMPLSIIYIV) traverse the membrane as a helical segment. Topologically, residues 85–92 (MDRWKLGY) are extracellular. A helical transmembrane segment spans residues 93–118 (FLCEVWLSVDMTCCTCSILHLCVIAL). Cys-95 and Cys-173 are oxidised to a cystine. Asp-102 and Cys-106 together coordinate serotonin. The DRY motif; important for ligand-induced conformation changes motif lies at 119-121 (DRY). At 119–138 (DRYWAITNAIEYARKRTAKR) the chain is on the cytoplasmic side. A helical membrane pass occupies residues 139–157 (AALMILTVWTISIFISMPP). Residues 158–179 (LFWRSHRRLSPPPSQCTIQHDH) lie on the Extracellular side of the membrane. The chain crosses the membrane as a helical span at residues 180 to 203 (VIYTIYSTLGAFYIPLTLILILYY). Over 204 to 291 (RIYHAAKSLY…SSTRERKAAR (88 aa)) the chain is Cytoplasmic. The helical transmembrane segment at 292-316 (ILGLILGAFILSWLPFFIKELIVGL) threads the bilayer. Over 317-322 (SIYTVS) the chain is Extracellular. The helical transmembrane segment at 323–345 (SEVADFLTWLGYVNSLINPLLYT) threads the bilayer. Residues 340–344 (NPLLY) carry the NPxxY motif; important for ligand-induced conformation changes and signaling motif. Residues 346-365 (SFNEDFKLAFKKLIRCREHT) lie on the Cytoplasmic side of the membrane.

It belongs to the G-protein coupled receptor 1 family. Detected in brain.

The protein resides in the cell membrane. Functionally, G-protein coupled receptor for 5-hydroxytryptamine (serotonin). Also functions as a receptor for various alkaloids and psychoactive substances. Ligand binding causes a conformation change that triggers signaling via guanine nucleotide-binding proteins (G proteins) and modulates the activity of downstream effectors, such as adenylate cyclase. HTR1E is coupled to G(i)/G(o) G alpha proteins and mediates inhibitory neurotransmission by inhibiting adenylate cyclase activity. This chain is 5-hydroxytryptamine receptor 1E, found in Homo sapiens (Human).